Consider the following 364-residue polypeptide: Fructose-bisphosphate aldolase C (364 aa).

Tyr5 is modified (phosphotyrosine). Residues Ser36, Ser39, and Ser45 each carry the phosphoserine modification. A substrate-binding site is contributed by Arg56. Lys111 bears the N6-acetyllysine mark. Ser132 is subject to Phosphoserine. Lys147 provides a ligand contact to substrate. The active-site Proton acceptor is Glu188. The active-site Schiff-base intermediate with dihydroxyacetone-P is the Lys230.

This sequence belongs to the class I fructose-bisphosphate aldolase family. As to quaternary structure, homotetramer. Interacts with ATP6V1E1. May interact with PLD2.

The enzyme catalyses beta-D-fructose 1,6-bisphosphate = D-glyceraldehyde 3-phosphate + dihydroxyacetone phosphate. It participates in carbohydrate degradation; glycolysis; D-glyceraldehyde 3-phosphate and glycerone phosphate from D-glucose: step 4/4. The polypeptide is Fructose-bisphosphate aldolase C (ALDOC) (Homo sapiens (Human)).